Reading from the N-terminus, the 156-residue chain is Endoribonuclease YbeY (156 aa).

The Zn(2+) site is built by H117, H121, and H127.

This sequence belongs to the endoribonuclease YbeY family. Zn(2+) serves as cofactor.

Its subcellular location is the cytoplasm. In terms of biological role, single strand-specific metallo-endoribonuclease involved in late-stage 70S ribosome quality control and in maturation of the 3' terminus of the 16S rRNA. This Shewanella halifaxensis (strain HAW-EB4) protein is Endoribonuclease YbeY.